The primary structure comprises 198 residues: Putative coiled-coil domain-containing protein 196 (198 aa).

Residues 24–117 adopt a coiled-coil conformation; it reads NYLKELNEDL…RKEMEMLWNK (94 aa). Basic and acidic residues-rich tracts occupy residues 135–144 and 154–167; these read NKTDLQDGKA and TKNE…EKGK. The segment at 135–198 is disordered; sequence NKTDLQDGKA…VSGTSQHHSE (64 aa). A compositionally biased stretch (polar residues) spans 187-198; sequence GQVSGTSQHHSE.

This Bos taurus (Bovine) protein is Putative coiled-coil domain-containing protein 196.